The primary structure comprises 211 residues: tRNA (guanine-N(7)-)-methyltransferase (211 aa).

4 residues coordinate S-adenosyl-L-methionine: E44, D69, D96, and D118. The active site involves D118. K122 provides a ligand contact to substrate. The tract at residues 124-129 is interaction with RNA; that stretch reads RHEKRR. Residues D154 and 191 to 194 each bind substrate; that span reads TEYE.

This sequence belongs to the class I-like SAM-binding methyltransferase superfamily. TrmB family.

The enzyme catalyses guanosine(46) in tRNA + S-adenosyl-L-methionine = N(7)-methylguanosine(46) in tRNA + S-adenosyl-L-homocysteine. It functions in the pathway tRNA modification; N(7)-methylguanine-tRNA biosynthesis. In terms of biological role, catalyzes the formation of N(7)-methylguanine at position 46 (m7G46) in tRNA. The chain is tRNA (guanine-N(7)-)-methyltransferase from Streptococcus pneumoniae (strain JJA).